A 274-amino-acid chain; its full sequence is Undecaprenyl-diphosphatase (274 aa).

A run of 8 helical transmembrane segments spans residues 9 to 29, 47 to 67, 95 to 115, 120 to 140, 161 to 181, 197 to 217, 224 to 244, and 254 to 274; these read LEYLKFFLYGLIQGFTEFIPV, PGASLSATIQLGSVLAIAWYF, ILIGTIPIVLLGGSIKLFVPY, VLRSNLSIALVSFLMAFFMYL, LIGFFQAFAIFPGVSRSGITI, FSFLLGIPAISLAAIVEFISS, LGFFPLFVGLITTFVSSLLAI, and NGLKIFIIYRVIFGIVILLNL.

It belongs to the UppP family.

Its subcellular location is the cell inner membrane. It carries out the reaction di-trans,octa-cis-undecaprenyl diphosphate + H2O = di-trans,octa-cis-undecaprenyl phosphate + phosphate + H(+). Its function is as follows. Catalyzes the dephosphorylation of undecaprenyl diphosphate (UPP). Confers resistance to bacitracin. This Prochlorococcus marinus (strain AS9601) protein is Undecaprenyl-diphosphatase.